We begin with the raw amino-acid sequence, 192 residues long: Thymidine kinase (192 aa).

ATP-binding positions include 9 to 16 (ASMNAGKS) and 87 to 90 (DEAQ). Glu88 (proton acceptor) is an active-site residue. Cys145, Cys147, Cys182, and His185 together coordinate Zn(2+).

Belongs to the thymidine kinase family. Homotetramer.

The protein localises to the cytoplasm. It catalyses the reaction thymidine + ATP = dTMP + ADP + H(+). In Novosphingobium aromaticivorans (strain ATCC 700278 / DSM 12444 / CCUG 56034 / CIP 105152 / NBRC 16084 / F199), this protein is Thymidine kinase.